The primary structure comprises 669 residues: Dymeclin (669 aa).

Residue glycine 2 is the site of N-myristoyl glycine attachment.

It belongs to the dymeclin family. Interacts with GOLM1 and PPIB. Myristoylated in vitro; myristoylation is not essential for protein targeting to Golgi compartment. As to expression, expressed in most embryo-fetal and adult tissues. Abundant in primary chondrocytes, osteoblasts, cerebellum, kidney, lung, stomach, heart, pancreas and fetal brain. Very low or no expression in the spleen, thymus, esophagus, bladder and thyroid gland.

It is found in the cytoplasm. It localises to the golgi apparatus. Its subcellular location is the membrane. Functionally, necessary for correct organization of Golgi apparatus. Involved in bone development. This chain is Dymeclin (DYM), found in Homo sapiens (Human).